A 263-amino-acid chain; its full sequence is Probable septum site-determining protein MinC (263 aa).

The tract at residues 107 to 159 (LPPSGARERPLDIKDSAPRKPAEEPSPSAGEARPEPAKAEEKPADPVSRPTKV) is disordered. 2 stretches are compositionally biased toward basic and acidic residues: residues 112–129 (ARERPLDIKDSAPRKPAE) and 138–150 (ARPEPAKAEEKPA).

The protein belongs to the MinC family. Interacts with MinD and FtsZ.

In terms of biological role, cell division inhibitor that blocks the formation of polar Z ring septums. Rapidly oscillates between the poles of the cell to destabilize FtsZ filaments that have formed before they mature into polar Z rings. Prevents FtsZ polymerization. The polypeptide is Probable septum site-determining protein MinC (Pseudomonas aeruginosa (strain UCBPP-PA14)).